The chain runs to 590 residues: Arginine--tRNA ligase (590 aa).

The short motif at 131-141 (PNIAKEMHVGH) is the 'HIGH' region element.

This sequence belongs to the class-I aminoacyl-tRNA synthetase family. As to quaternary structure, monomer.

It is found in the cytoplasm. It carries out the reaction tRNA(Arg) + L-arginine + ATP = L-arginyl-tRNA(Arg) + AMP + diphosphate. The chain is Arginine--tRNA ligase from Synechococcus sp. (strain RCC307).